The primary structure comprises 137 residues: BolA-like protein 1 (137 aa).

A Phosphoserine modification is found at S81. The segment at 115-137 is disordered; that stretch reads RENPQLDISPPCLGGSKKTRGTS.

The protein belongs to the BolA/IbaG family. In terms of assembly, interacts with GLRX5.

The protein resides in the mitochondrion. Functionally, acts as a mitochondrial iron-sulfur (Fe-S) cluster assembly factor that facilitates (Fe-S) cluster insertion into a subset of mitochondrial proteins. Probably acts together with the monothiol glutaredoxin GLRX5. May protect cells against oxidative stress. This Mus musculus (Mouse) protein is BolA-like protein 1 (Bola1).